Consider the following 332-residue polypeptide: Diaminopimelate epimerase (332 aa).

2 residues coordinate substrate: Asn13 and Asn73. Catalysis depends on Cys82, which acts as the Proton donor. Residues 83 to 84, Asn172, Asn209, and 227 to 228 contribute to the substrate site; these read GN and ER. The Proton acceptor role is filled by Cys236. 237-238 contacts substrate; the sequence is GT.

This sequence belongs to the diaminopimelate epimerase family. As to quaternary structure, homodimer.

Its subcellular location is the cytoplasm. The enzyme catalyses (2S,6S)-2,6-diaminopimelate = meso-2,6-diaminopimelate. It participates in amino-acid biosynthesis; L-lysine biosynthesis via DAP pathway; DL-2,6-diaminopimelate from LL-2,6-diaminopimelate: step 1/1. In terms of biological role, catalyzes the stereoinversion of LL-2,6-diaminopimelate (L,L-DAP) to meso-diaminopimelate (meso-DAP), a precursor of L-lysine and an essential component of the bacterial peptidoglycan. In Lactiplantibacillus plantarum (strain ATCC BAA-793 / NCIMB 8826 / WCFS1) (Lactobacillus plantarum), this protein is Diaminopimelate epimerase.